The primary structure comprises 249 residues: MRILVSNDDGFHAEGIQVLAMELRKIAEVIIVAPDRNRSAASSSLTLVEPLRPRHLDNGDYCVNGTPADCVHLALNGFLSGQVDLVVSGINAGCNMGDDTIYSGTLAAALEGRHLGLPAIAVSLDGRQHYETAARVVCDLIPKLHHQLLNPREIININVPDLLFEELKGYKVCRLGYRASSAEVIKQKDPRDETIYWIGPSALPEDESEGTDFYAVKNGYVSITPIQADLTAYHSLLSLQNWLEQEFTK.

A divalent metal cation is bound by residues Asp8, Asp9, Ser39, and Asn91.

This sequence belongs to the SurE nucleotidase family. Requires a divalent metal cation as cofactor.

It localises to the cytoplasm. It carries out the reaction a ribonucleoside 5'-phosphate + H2O = a ribonucleoside + phosphate. Functionally, nucleotidase that shows phosphatase activity on nucleoside 5'-monophosphates. The chain is 5'-nucleotidase SurE from Haemophilus influenzae (strain 86-028NP).